The following is a 298-amino-acid chain: MQDFSSLLLKLQEYWKDQGCLVIQPYDIPAGAGTFHPATLLRSLDKKPWNVAYVAPSRRPTDGRYGENPNRLGSYYQFQVVIKPSPSNIQELYLKSLEVLGINLNEHDIRFVEDNWESPTLGAWGLGWEVWLDGMEVTQFTYFQQVGGIPCSPIPVEITYGLERLTMYVQKVENILEIEWAKKDNESVRYAQVHLESEYEFSKYHFEVASVERLLEMFKNAQAEALHCLENKLPLPAYDLVMLCSHFFNILDARKAISVAERQNYILQIRDLAKGCAVLYKEQEEEREERLKNALTKA.

This sequence belongs to the class-II aminoacyl-tRNA synthetase family. Tetramer of two alpha and two beta subunits.

The protein localises to the cytoplasm. It carries out the reaction tRNA(Gly) + glycine + ATP = glycyl-tRNA(Gly) + AMP + diphosphate. The polypeptide is Glycine--tRNA ligase alpha subunit (glyQ) (Helicobacter pylori (strain J99 / ATCC 700824) (Campylobacter pylori J99)).